A 115-amino-acid polypeptide reads, in one-letter code: Meiotically up-regulated gene 42 protein (115 aa).

Functionally, has a role in meiosis. This is Meiotically up-regulated gene 42 protein (mug42) from Schizosaccharomyces pombe (strain 972 / ATCC 24843) (Fission yeast).